A 77-amino-acid polypeptide reads, in one-letter code: Putative neurotoxin 1 (77 aa).

Residues 1-25 (MKAFIAILSIAIVLLLIVSIKETSA) form the signal peptide. Positions 26–46 (KDCKQECVKRYTKGDLTNFLK) are excised as a propeptide.

It belongs to the scolopendra neurotoxin 3 family. Contains 2 disulfide bonds. In terms of tissue distribution, expressed by the venom gland.

The protein localises to the secreted. This chain is Putative neurotoxin 1, found in Scolopendra mutilans (Chinese red-headed centipede).